The sequence spans 384 residues: DNA dC-&gt;dU-editing enzyme APOBEC-3G (384 aa).

The interval 1–60 (MKPHFRNPVERMYQDTFSDNFYNRPILSHRNTVWLCYEVKTKGPSRPPLDAKIFRGQVYS) is essential for cytoplasmic localization. CMP/dCMP-type deaminase domains follow at residues 29–138 (HRNT…LRSL) and 214–328 (GRHE…LRTL). Thr32 bears the Phosphothreonine; by PKA mark. Positions 65, 97, and 100 each coordinate Zn(2+). Residues 209–336 (ELWVRGRHET…TLAKAGAKIS (128 aa)) are necessary for homooligomerization. An interaction with DNA region spans residues 213–215 (RGR). Phosphothreonine; by PKA and CAMK2 is present on Thr218. His257 provides a ligand contact to Zn(2+). Glu259 acts as the Proton donor in catalysis. Residues Cys288 and Cys291 each coordinate Zn(2+). An interaction with DNA region spans residues 313 to 320 (RIYDDQGR).

Belongs to the cytidine and deoxycytidylate deaminase family. Homodimer. Homooligomer. Can bind RNA to form ribonucleoprotein complexes of high-molecular-mass (HMM) or low-molecular-mass (LMM). HMM is inactive and heterogeneous in protein composition because of binding nonselectively to cellular RNAs, which in turn are associated with variety of cellular proteins. The LMM form which is enzymatically active has few or no RNAs associated. Its ability to form homooligomer is distinct from its ability to assemble into HMM. Interacts with APOBEC3B, APOBEC3F, MOV10, AGO2, EIF4E, EIF4ENIF1, DCP2 and DDX6 in an RNA-dependent manner. Interacts with AGO1, AGO3 and PKA/PRKACA. The cofactor is Zn(2+).

The protein localises to the cytoplasm. It localises to the nucleus. The protein resides in the P-body. It catalyses the reaction a 2'-deoxycytidine in single-stranded DNA + H2O + H(+) = a 2'-deoxyuridine in single-stranded DNA + NH4(+). Functionally, DNA deaminase (cytidine deaminase) which acts as an inhibitor of retrovirus replication and retrotransposon mobility via deaminase-dependent and -independent mechanisms. Exhibits antiviral activity against vif-deficient: HIV-1 and simian immunodeficiency viruses (SIVs) and also against simian foamy virus (SFV). After the penetration of retroviral nucleocapsids into target cells of infection and the initiation of reverse transcription, it can induce the conversion of cytosine to uracil in the minus-sense single-strand viral DNA, leading to G-to-A hypermutations in the subsequent plus-strand viral DNA. The resultant detrimental levels of mutations in the proviral genome, along with a deamination-independent mechanism that works prior to the proviral integration, together exert efficient antiretroviral effects in infected target cells. Selectively targets single-stranded DNA and does not deaminate double-stranded DNA or single- or double-stranded RNA. May inhibit the mobility of LTR retrotransposons. This is DNA dC-&gt;dU-editing enzyme APOBEC-3G (APOBEC3G) from Pan troglodytes (Chimpanzee).